The sequence spans 550 residues: Methionine--tRNA ligase (550 aa).

A 'HIGH' region motif is present at residues 12–22; it reads PYANGPLHFGH. Zn(2+)-binding residues include Cys-144, Cys-147, Cys-157, and Cys-160. The short motif at 330–334 is the 'KMSKS' region element; it reads QFSKS. Position 333 (Lys-333) interacts with ATP.

The protein belongs to the class-I aminoacyl-tRNA synthetase family. MetG type 1 subfamily. In terms of assembly, monomer. Zn(2+) is required as a cofactor.

The protein localises to the cytoplasm. It catalyses the reaction tRNA(Met) + L-methionine + ATP = L-methionyl-tRNA(Met) + AMP + diphosphate. In terms of biological role, is required not only for elongation of protein synthesis but also for the initiation of all mRNA translation through initiator tRNA(fMet) aminoacylation. The protein is Methionine--tRNA ligase of Chlamydia caviae (strain ATCC VR-813 / DSM 19441 / 03DC25 / GPIC) (Chlamydophila caviae).